The primary structure comprises 413 residues: Transmembrane protein 184A (413 aa).

7 consecutive transmembrane segments (helical) span residues 47-69 (WLFL…ALVL), 93-113 (LLLI…LLGD), 130-150 (FVIY…GAIM), 187-207 (LQFC…QAFG), 223-243 (VTLI…LFYF), 258-278 (FLTI…LAIL), and 300-320 (LAAG…SVAL). The tract at residues 372–413 (QHYTQQATHEAPRPGTHPSGGSGGSRKSRSLEKRMLIPSEDL) is disordered.

Belongs to the TMEM184 family. As to expression, expressed in vascular cells (at protein level).

It localises to the cell membrane. The protein resides in the cytoplasm. The protein localises to the perinuclear region. Its subcellular location is the cytoplasmic vesicle membrane. It is found in the early endosome membrane. It localises to the endosome. The protein resides in the cytoplasmic vesicle. The protein localises to the secretory vesicle membrane. Its function is as follows. Acts as a heparin receptor in vascular cells. May be involved in vesicle transport in exocrine cells and Sertoli cells. In Homo sapiens (Human), this protein is Transmembrane protein 184A (TMEM184A).